The following is a 118-amino-acid chain: Large ribosomal subunit protein bL20 (118 aa).

It belongs to the bacterial ribosomal protein bL20 family.

Its function is as follows. Binds directly to 23S ribosomal RNA and is necessary for the in vitro assembly process of the 50S ribosomal subunit. It is not involved in the protein synthesizing functions of that subunit. In Trichormus variabilis (strain ATCC 29413 / PCC 7937) (Anabaena variabilis), this protein is Large ribosomal subunit protein bL20.